The sequence spans 174 residues: Pediocin PA-1 biosynthesis protein PedC (174 aa).

Probably involved in pediocin PA-1 biosynthesis. This is Pediocin PA-1 biosynthesis protein PedC (pedC) from Pediococcus acidilactici.